Consider the following 318-residue polypeptide: Endochitinase 1 (318 aa).

A signal peptide spans 1-18 (EFTTLFLLFSVLLLSASA). A Chitin-binding type-1 domain is found at 19–60 (EQCGSQAGGALCASGLCCSKFGWCGDTNDYCGPGNCQSQCPG). 7 cysteine pairs are disulfide-bonded: Cys21/Cys36, Cys30/Cys42, Cys35/Cys49, Cys54/Cys58, Cys89/Cys152, Cys164/Cys172, and Cys271/Cys303. Glu134 functions as the Proton donor in the catalytic mechanism. A propeptide spans 312–318 (GLLVDTM) (removed in mature form, vacuolar targeting).

Belongs to the glycosyl hydrolase 19 family. Chitinase class I subfamily.

The protein localises to the vacuole. It catalyses the reaction Random endo-hydrolysis of N-acetyl-beta-D-glucosaminide (1-&gt;4)-beta-linkages in chitin and chitodextrins.. Its function is as follows. Defense against chitin-containing fungal pathogens. This Solanum tuberosum (Potato) protein is Endochitinase 1 (CHTB1).